The sequence spans 208 residues: Outer-membrane lipoprotein carrier protein (208 aa).

Positions 1 to 25 are cleaved as a signal peptide; it reads MKKLFSAKLFSALVLSFSLFSTAHA.

Belongs to the LolA family. As to quaternary structure, monomer.

It localises to the periplasm. Functionally, participates in the translocation of lipoproteins from the inner membrane to the outer membrane. Only forms a complex with a lipoprotein if the residue after the N-terminal Cys is not an aspartate (The Asp acts as a targeting signal to indicate that the lipoprotein should stay in the inner membrane). This is Outer-membrane lipoprotein carrier protein from Vibrio campbellii (strain ATCC BAA-1116).